The chain runs to 194 residues: Fe/S biogenesis protein NfuA (194 aa).

Cys-152 and Cys-155 together coordinate [4Fe-4S] cluster.

Belongs to the NfuA family. Homodimer. Requires [4Fe-4S] cluster as cofactor.

Its function is as follows. Involved in iron-sulfur cluster biogenesis. Binds a 4Fe-4S cluster, can transfer this cluster to apoproteins, and thereby intervenes in the maturation of Fe/S proteins. Could also act as a scaffold/chaperone for damaged Fe/S proteins. The chain is Fe/S biogenesis protein NfuA from Pseudomonas putida (strain ATCC 700007 / DSM 6899 / JCM 31910 / BCRC 17059 / LMG 24140 / F1).